We begin with the raw amino-acid sequence, 94 residues long: Integration host factor subunit beta (94 aa).

It belongs to the bacterial histone-like protein family. Heterodimer of an alpha and a beta chain.

In terms of biological role, this protein is one of the two subunits of integration host factor, a specific DNA-binding protein that functions in genetic recombination as well as in transcriptional and translational control. The protein is Integration host factor subunit beta of Serratia proteamaculans (strain 568).